The sequence spans 140 residues: MADDLVDGLTRAGLPGAKATARYVHTSPTKARRVVDLVRGRSASEALDILRFAPQAASTDVYKVVASAVANAENNHNLDPATLWIGAAYVDEGPTLKRIRPRAQGRAYRIRKRTSHITVVVESREPVSTGAGARTTRRAR.

The protein belongs to the universal ribosomal protein uL22 family. As to quaternary structure, part of the 50S ribosomal subunit.

Its function is as follows. This protein binds specifically to 23S rRNA; its binding is stimulated by other ribosomal proteins, e.g. L4, L17, and L20. It is important during the early stages of 50S assembly. It makes multiple contacts with different domains of the 23S rRNA in the assembled 50S subunit and ribosome. In terms of biological role, the globular domain of the protein is located near the polypeptide exit tunnel on the outside of the subunit, while an extended beta-hairpin is found that lines the wall of the exit tunnel in the center of the 70S ribosome. The sequence is that of Large ribosomal subunit protein uL22 from Parafrankia sp. (strain EAN1pec).